The sequence spans 245 residues: 1-(5-phosphoribosyl)-5-[(5-phosphoribosylamino)methylideneamino] imidazole-4-carboxamide isomerase (245 aa).

Catalysis depends on Asp-7, which acts as the Proton acceptor. The Proton donor role is filled by Asp-129.

Belongs to the HisA/HisF family.

The protein localises to the cytoplasm. The enzyme catalyses 1-(5-phospho-beta-D-ribosyl)-5-[(5-phospho-beta-D-ribosylamino)methylideneamino]imidazole-4-carboxamide = 5-[(5-phospho-1-deoxy-D-ribulos-1-ylimino)methylamino]-1-(5-phospho-beta-D-ribosyl)imidazole-4-carboxamide. It participates in amino-acid biosynthesis; L-histidine biosynthesis; L-histidine from 5-phospho-alpha-D-ribose 1-diphosphate: step 4/9. This Shewanella frigidimarina (strain NCIMB 400) protein is 1-(5-phosphoribosyl)-5-[(5-phosphoribosylamino)methylideneamino] imidazole-4-carboxamide isomerase.